Consider the following 349-residue polypeptide: Heat-inducible transcription repressor HrcA (349 aa).

This sequence belongs to the HrcA family.

In terms of biological role, negative regulator of class I heat shock genes (grpE-dnaK-dnaJ and groELS operons). Prevents heat-shock induction of these operons. This chain is Heat-inducible transcription repressor HrcA, found in Lactobacillus acidophilus (strain ATCC 700396 / NCK56 / N2 / NCFM).